A 917-amino-acid chain; its full sequence is Protein STE5 (917 aa).

2 disordered regions span residues 1 to 25 (MMETPTDNIVSPFHNFGSSTQYSGT) and 58 to 151 (FQRS…LSDN). The span at 16–25 (FGSSTQYSGT) shows a compositional bias: polar residues. Residues 69–84 (SPSPISSSTFSFSPKS) show a composition bias toward low complexity. Composition is skewed to polar residues over residues 85–110 (RVTSSNSSGNEDGNLMNTPSTVSTDY) and 118–138 (TSSLPRPNSNLFHASNSNLSR). Ser329 bears the Phosphoserine mark. Acidic residues predominate over residues 778–794 (HDDDDEEDNDDSTDNEL). The segment at 778–821 (HDDDDEEDNDDSTDNELDNSSGSLSDAESTTTIHIDSPFDNENA) is disordered. The segment covering 799 to 821 (GSLSDAESTTTIHIDSPFDNENA) has biased composition (polar residues).

To yeast FAR1. In terms of processing, may be regulated at the phosphorylation level, and by the mating type of the cell and depends on an intact pheromone-response pathway.

It is found in the cytoplasm. Its function is as follows. Component of the pheromone signal transduction pathway. It mediates pheromone signals acting between STE20 and STE11. It is absolutely required for pheromone-induced transcription of FUS1. May play a role in cell-cycle arrest in response to pheromone. In Saccharomyces cerevisiae (strain ATCC 204508 / S288c) (Baker's yeast), this protein is Protein STE5 (STE5).